Here is an 820-residue protein sequence, read N- to C-terminus: Penicillin-binding protein 1A (820 aa).

The tract at residues 1-120 (MNSDGRHHQS…PAGRLPQPRV (120 aa)) is disordered. Over residues 41–53 (TDDRSAPHADSIE) the composition is skewed to basic and acidic residues. Residues 139–159 (LTAAVVILLPMVTFTMAYLIV) form a helical membrane-spanning segment. Residues 180-360 (GSEIAKIVPP…RWNWVLDGMV (181 aa)) are transglycosylase. Glu-213 (proton donor; for transglycosylase activity) is an active-site residue. The segment at 453 to 743 (AVVSIDPHNG…PSDIWKATMD (291 aa)) is transpeptidase. Ser-487 (acyl-ester intermediate; for transpeptidase activity) is an active-site residue. The span at 792–804 (ITIPIGPPTTITL) shows a compositional bias: low complexity. The segment at 792-820 (ITIPIGPPTTITLAPPPPAPPAATPTPPP) is disordered. Residues 805–820 (APPPPAPPAATPTPPP) are compositionally biased toward pro residues.

The protein in the N-terminal section; belongs to the glycosyltransferase 51 family. It in the C-terminal section; belongs to the transpeptidase family. As to quaternary structure, interacts with RipA via its transpeptidase domain (residues 561-820).

The protein localises to the cell membrane. It carries out the reaction [GlcNAc-(1-&gt;4)-Mur2Ac(oyl-L-Ala-gamma-D-Glu-L-Lys-D-Ala-D-Ala)](n)-di-trans,octa-cis-undecaprenyl diphosphate + beta-D-GlcNAc-(1-&gt;4)-Mur2Ac(oyl-L-Ala-gamma-D-Glu-L-Lys-D-Ala-D-Ala)-di-trans,octa-cis-undecaprenyl diphosphate = [GlcNAc-(1-&gt;4)-Mur2Ac(oyl-L-Ala-gamma-D-Glu-L-Lys-D-Ala-D-Ala)](n+1)-di-trans,octa-cis-undecaprenyl diphosphate + di-trans,octa-cis-undecaprenyl diphosphate + H(+). The catalysed reaction is Preferential cleavage: (Ac)2-L-Lys-D-Ala-|-D-Ala. Also transpeptidation of peptidyl-alanyl moieties that are N-acyl substituents of D-alanine.. It participates in cell wall biogenesis; peptidoglycan biosynthesis. Cell wall formation. Synthesis of cross-linked peptidoglycan from the lipid intermediates. The enzyme has a penicillin-insensitive transglycosylase N-terminal domain (formation of linear glycan strands) and a penicillin-sensitive transpeptidase C-terminal domain (cross-linking of the peptide subunits). Has little peptidoglycan hydrolytic activity; however it inhibits the synergistic peptidoglycan hydrolysis of RipA plus RpfB. The chain is Penicillin-binding protein 1A (ponA1) from Mycobacterium tuberculosis (strain ATCC 25618 / H37Rv).